Here is a 466-residue protein sequence, read N- to C-terminus: Transcription factor SOX-10 (466 aa).

5 disordered regions span residues 1–67 (MAEE…DDDK), 160–200 (LRMQ…QGGA), 213–275 (DHRH…DFGN), 344–375 (TVSP…QPST), and 433–466 (RPLY…LSRP). The span at 23–32 (LSPGSAPSLG) shows a compositional bias: low complexity. Serine 24 is subject to Phosphoserine. The interval 62 to 102 (EADDDKFPVCIREAVSQVLSGYDWTLVPMPVRVNGASKSKP) is dimerization (DIM). A DNA-binding region (HMG box) is located at residues 104-172 (VKRPMNAFMV…QHKKDHPDYK (69 aa)). Residues 160 to 173 (LRMQHKKDHPDYKY) show a composition bias toward basic and acidic residues. A compositionally biased stretch (low complexity) spans 183 to 200 (AAQGEAECPGGEAEQGGA). The interval 228-310 (PEHPSGQSHG…LPPNGHPGHV (83 aa)) is transactivation domain (TAM). Positions 254 to 271 (ADPKRDGRSLGEGGKPHI) are enriched in basic and acidic residues. The segment at 353–466 (KAQVKTETTG…QPVYTTLSRP (114 aa)) is transactivation domain (TAC). The segment covering 440-466 (SDPSPSGPQSHSPTHWEQPVYTTLSRP) has biased composition (polar residues).

In terms of assembly, monomer. Interacts with Armcx3 at the mitochondrial outer membrane surface. Interacts with PAX3. In terms of tissue distribution, expressed in oligodendroglia of the spinal tube (at protein level).

It is found in the cytoplasm. Its subcellular location is the nucleus. The protein localises to the mitochondrion outer membrane. Transcription factor that plays a central role in developing and mature glia. Specifically activates expression of myelin genes, during oligodendrocyte (OL) maturation, such as DUSP15 and MYRF, thereby playing a central role in oligodendrocyte maturation and CNS myelination. Once induced, MYRF cooperates with SOX10 to implement the myelination program. Transcriptional activator of MITF, acting synergistically with PAX3. Transcriptional activator of MBP, via binding to the gene promoter. The protein is Transcription factor SOX-10 (Sox10) of Mus musculus (Mouse).